We begin with the raw amino-acid sequence, 334 residues long: Probable GTP 3',8-cyclase (334 aa).

Residues 24-256 (PYGRKVTGLR…RKKYMIDGVE (233 aa)) enclose the Radical SAM core domain. R33 lines the GTP pocket. Residues C40 and C44 each contribute to the [4Fe-4S] cluster site. Y46 is an S-adenosyl-L-methionine binding site. C47 contributes to the [4Fe-4S] cluster binding site. A GTP-binding site is contributed by K85. G89 serves as a coordination point for S-adenosyl-L-methionine. Position 113 (T113) interacts with GTP. S137 serves as a coordination point for S-adenosyl-L-methionine. K176 serves as a coordination point for GTP. The [4Fe-4S] cluster site is built by C269 and C272. 274–276 (RLR) is a GTP binding site. [4Fe-4S] cluster is bound at residue C286.

It belongs to the radical SAM superfamily. MoaA family. [4Fe-4S] cluster serves as cofactor.

The catalysed reaction is GTP + AH2 + S-adenosyl-L-methionine = (8S)-3',8-cyclo-7,8-dihydroguanosine 5'-triphosphate + 5'-deoxyadenosine + L-methionine + A + H(+). The protein operates within cofactor biosynthesis; molybdopterin biosynthesis. In terms of biological role, catalyzes the cyclization of GTP to (8S)-3',8-cyclo-7,8-dihydroguanosine 5'-triphosphate. This Methanosarcina mazei (strain ATCC BAA-159 / DSM 3647 / Goe1 / Go1 / JCM 11833 / OCM 88) (Methanosarcina frisia) protein is Probable GTP 3',8-cyclase.